An 816-amino-acid polypeptide reads, in one-letter code: Protein EFR3 homolog B (816 aa).

Residues 206–219 show a composition bias toward polar residues; sequence SGEGTESRSPSPLQ. Residues 206 to 230 are disordered; that stretch reads SGEGTESRSPSPLQASEKEKESPAE. Basic and acidic residues predominate over residues 221–230; sequence SEKEKESPAE.

Belongs to the EFR3 family. As to quaternary structure, component of a phosphatidylinositol 4-kinase (PI4K) complex. In terms of processing, palmitoylated at its N-terminus, anchoring the protein to the plasma membrane.

It localises to the cell membrane. Functionally, component of a complex required to localize phosphatidylinositol 4-kinase (PI4K) to the plasma membrane. The complex acts as a regulator of phosphatidylinositol 4-phosphate (PtdIns(4)P) synthesis. In the complex, efr3b probably acts as the membrane-anchoring component. This is Protein EFR3 homolog B (efr3b) from Danio rerio (Zebrafish).